Consider the following 236-residue polypeptide: MASEELASKLQRRLQWEEGDSGLQPAPGAAPDPEPQPQPPAWAPTARADAELSAQLNRRLDINEGAARPRRCKVFHPYSEFPEFSRRLIKDLESMFKLYDAGRDGFIDLMELKLMMEKLGAPQTHLGLKSMIKEVDEDFDGKLSFREFLLIFHKAAAGELQEDSGLMALAKLSEIDVALEGVKGAKDFFEAKVQALSCASKFEAELKAEQDERKREEEKRKVRQAAFRELKAAFSA.

Residues 1-48 form a disordered region; sequence MASEELASKLQRRLQWEEGDSGLQPAPGAAPDPEPQPQPPAWAPTARA. Positions 28–42 are enriched in pro residues; the sequence is GAAPDPEPQPQPPAW. EF-hand domains follow at residues 87-122 and 123-158; these read RLIKDLESMFKLYDAGRDGFIDLMELKLMMEKLGAP and QTHLGLKSMIKEVDEDFDGKLSFREFLLIFHKAAAG. Residues D100, D104, E111, D136, D138, D140, K142, and E147 each contribute to the Ca(2+) site.

The protein localises to the mitochondrion inner membrane. Functionally, acts as a calcium sensor for mitochondrial flash (mitoflash) activation, an event characterized by stochastic bursts of superoxide production. May play a role in neuronal differentiation. The sequence is that of EF-hand domain-containing protein D1 (EFHD1) from Bos taurus (Bovine).